The sequence spans 93 residues: Integration host factor subunit beta (93 aa).

Belongs to the bacterial histone-like protein family. As to quaternary structure, heterodimer of an alpha and a beta chain.

Its function is as follows. This protein is one of the two subunits of integration host factor, a specific DNA-binding protein that functions in genetic recombination as well as in transcriptional and translational control. The protein is Integration host factor subunit beta of Haemophilus ducreyi (strain 35000HP / ATCC 700724).